A 254-amino-acid chain; its full sequence is 4-hydroxy-tetrahydrodipicolinate reductase (254 aa).

8–13 (GAFGRM) serves as a coordination point for NAD(+). Residue lysine 36 coordinates NADP(+). Residues 89 to 91 (GTT) and 115 to 118 (STNY) contribute to the NAD(+) site. Histidine 147 functions as the Proton donor/acceptor in the catalytic mechanism. Histidine 148 is a (S)-2,3,4,5-tetrahydrodipicolinate binding site. Lysine 151 (proton donor) is an active-site residue. 157 to 158 (GT) contributes to the (S)-2,3,4,5-tetrahydrodipicolinate binding site.

Belongs to the DapB family.

It localises to the cytoplasm. The catalysed reaction is (S)-2,3,4,5-tetrahydrodipicolinate + NAD(+) + H2O = (2S,4S)-4-hydroxy-2,3,4,5-tetrahydrodipicolinate + NADH + H(+). It catalyses the reaction (S)-2,3,4,5-tetrahydrodipicolinate + NADP(+) + H2O = (2S,4S)-4-hydroxy-2,3,4,5-tetrahydrodipicolinate + NADPH + H(+). The protein operates within amino-acid biosynthesis; L-lysine biosynthesis via DAP pathway; (S)-tetrahydrodipicolinate from L-aspartate: step 4/4. Its function is as follows. Catalyzes the conversion of 4-hydroxy-tetrahydrodipicolinate (HTPA) to tetrahydrodipicolinate. This is 4-hydroxy-tetrahydrodipicolinate reductase from Methanospirillum hungatei JF-1 (strain ATCC 27890 / DSM 864 / NBRC 100397 / JF-1).